The chain runs to 319 residues: ATP-dependent 6-phosphofructokinase (319 aa).

Residue glycine 11 coordinates ATP. 21–25 (RAVTR) serves as a coordination point for ADP. ATP is bound by residues 72–73 (RF) and 102–105 (GDGS). Aspartate 103 is a Mg(2+) binding site. Position 125–127 (125–127 (SID)) interacts with substrate. Catalysis depends on aspartate 127, which acts as the Proton acceptor. Position 154 (arginine 154) interacts with ADP. Substrate contacts are provided by residues arginine 162 and 169–171 (MGR). Residues 185-187 (GAD) and 213-215 (KKH) each bind ADP. Residues glutamate 222, arginine 243, and 249 to 252 (HMQR) contribute to the substrate site.

It belongs to the phosphofructokinase type A (PFKA) family. ATP-dependent PFK group I subfamily. Prokaryotic clade 'B1' sub-subfamily. Homotetramer. Mg(2+) is required as a cofactor.

Its subcellular location is the cytoplasm. It carries out the reaction beta-D-fructose 6-phosphate + ATP = beta-D-fructose 1,6-bisphosphate + ADP + H(+). The protein operates within carbohydrate degradation; glycolysis; D-glyceraldehyde 3-phosphate and glycerone phosphate from D-glucose: step 3/4. Its activity is regulated as follows. Allosterically activated by ADP and other diphosphonucleosides, and allosterically inhibited by phosphoenolpyruvate. In terms of biological role, catalyzes the phosphorylation of D-fructose 6-phosphate to fructose 1,6-bisphosphate by ATP, the first committing step of glycolysis. In Lactobacillus gasseri (strain ATCC 33323 / DSM 20243 / BCRC 14619 / CIP 102991 / JCM 1131 / KCTC 3163 / NCIMB 11718 / NCTC 13722 / AM63), this protein is ATP-dependent 6-phosphofructokinase.